The chain runs to 150 residues: Ribosome-binding factor A (150 aa).

The tract at residues 126-150 (EVARDLSHDDDEDGGADEAPRNGDE) is disordered.

This sequence belongs to the RbfA family. In terms of assembly, monomer. Binds 30S ribosomal subunits, but not 50S ribosomal subunits or 70S ribosomes.

The protein resides in the cytoplasm. Functionally, one of several proteins that assist in the late maturation steps of the functional core of the 30S ribosomal subunit. Associates with free 30S ribosomal subunits (but not with 30S subunits that are part of 70S ribosomes or polysomes). Required for efficient processing of 16S rRNA. May interact with the 5'-terminal helix region of 16S rRNA. In Brucella abortus (strain S19), this protein is Ribosome-binding factor A.